A 218-amino-acid polypeptide reads, in one-letter code: Probable transaldolase (218 aa).

The active-site Schiff-base intermediate with substrate is lysine 83.

Belongs to the transaldolase family. Type 3B subfamily.

It is found in the cytoplasm. It carries out the reaction D-sedoheptulose 7-phosphate + D-glyceraldehyde 3-phosphate = D-erythrose 4-phosphate + beta-D-fructose 6-phosphate. It participates in carbohydrate degradation; pentose phosphate pathway; D-glyceraldehyde 3-phosphate and beta-D-fructose 6-phosphate from D-ribose 5-phosphate and D-xylulose 5-phosphate (non-oxidative stage): step 2/3. Functionally, transaldolase is important for the balance of metabolites in the pentose-phosphate pathway. In Kosmotoga olearia (strain ATCC BAA-1733 / DSM 21960 / TBF 19.5.1), this protein is Probable transaldolase.